Consider the following 96-residue polypeptide: RNA-binding protein Hfq (96 aa).

One can recognise a Sm domain in the interval 9-68 (DPFLNALRRERVPVSIYLVNGIKLQGQIESFDQFVILLKNTVSQMVYKHAISTVVPSRPV). A disordered region spans residues 64–96 (PSRPVSHHSNTGTNQAGTNYSGGNATQQDDVAE). The segment covering 70 to 96 (HHSNTGTNQAGTNYSGGNATQQDDVAE) has biased composition (polar residues).

It belongs to the Hfq family. As to quaternary structure, homohexamer.

Functionally, RNA chaperone that binds small regulatory RNA (sRNAs) and mRNAs to facilitate mRNA translational regulation in response to envelope stress, environmental stress and changes in metabolite concentrations. Also binds with high specificity to tRNAs. This Proteus mirabilis (strain HI4320) protein is RNA-binding protein Hfq.